We begin with the raw amino-acid sequence, 482 residues long: UDP-N-acetylmuramoyl-L-alanyl-D-glutamate--2,6-diaminopimelate ligase (482 aa).

Ser-30 is a binding site for UDP-N-acetyl-alpha-D-muramoyl-L-alanyl-D-glutamate. 111-117 (GTNGKTT) contacts ATP. Residues 153–154 (TT), Ser-180, Gln-186, and Arg-188 each bind UDP-N-acetyl-alpha-D-muramoyl-L-alanyl-D-glutamate. The residue at position 220 (Lys-220) is an N6-carboxylysine. Meso-2,6-diaminopimelate-binding positions include Arg-378, 402–405 (DNPR), Gly-455, and Glu-459. The Meso-diaminopimelate recognition motif motif lies at 402–405 (DNPR).

Belongs to the MurCDEF family. MurE subfamily. The cofactor is Mg(2+). Carboxylation is probably crucial for Mg(2+) binding and, consequently, for the gamma-phosphate positioning of ATP.

It localises to the cytoplasm. It catalyses the reaction UDP-N-acetyl-alpha-D-muramoyl-L-alanyl-D-glutamate + meso-2,6-diaminopimelate + ATP = UDP-N-acetyl-alpha-D-muramoyl-L-alanyl-gamma-D-glutamyl-meso-2,6-diaminopimelate + ADP + phosphate + H(+). It functions in the pathway cell wall biogenesis; peptidoglycan biosynthesis. Its function is as follows. Catalyzes the addition of meso-diaminopimelic acid to the nucleotide precursor UDP-N-acetylmuramoyl-L-alanyl-D-glutamate (UMAG) in the biosynthesis of bacterial cell-wall peptidoglycan. The chain is UDP-N-acetylmuramoyl-L-alanyl-D-glutamate--2,6-diaminopimelate ligase from Bacteroides thetaiotaomicron (strain ATCC 29148 / DSM 2079 / JCM 5827 / CCUG 10774 / NCTC 10582 / VPI-5482 / E50).